Consider the following 272-residue polypeptide: Proteasome subunit beta (272 aa).

Residues 1–47 (MSTGGDRLPEAFLRPGSSSFVEFLREVAPQSHPEHARPAGAGDVVHA) constitute a propeptide, removed in mature form; by autocatalysis. Thr-48 serves as the catalytic Nucleophile.

It belongs to the peptidase T1B family. The 20S proteasome core is composed of 14 alpha and 14 beta subunits that assemble into four stacked heptameric rings, resulting in a barrel-shaped structure. The two inner rings, each composed of seven catalytic beta subunits, are sandwiched by two outer rings, each composed of seven alpha subunits. The catalytic chamber with the active sites is on the inside of the barrel. Has a gated structure, the ends of the cylinder being occluded by the N-termini of the alpha-subunits. Is capped by the proteasome-associated ATPase, ARC.

It is found in the cytoplasm. The enzyme catalyses Cleavage of peptide bonds with very broad specificity.. It functions in the pathway protein degradation; proteasomal Pup-dependent pathway. Its activity is regulated as follows. The formation of the proteasomal ATPase ARC-20S proteasome complex, likely via the docking of the C-termini of ARC into the intersubunit pockets in the alpha-rings, may trigger opening of the gate for substrate entry. Interconversion between the open-gate and close-gate conformations leads to a dynamic regulation of the 20S proteasome proteolysis activity. Component of the proteasome core, a large protease complex with broad specificity involved in protein degradation. The chain is Proteasome subunit beta from Beutenbergia cavernae (strain ATCC BAA-8 / DSM 12333 / CCUG 43141 / JCM 11478 / NBRC 16432 / NCIMB 13614 / HKI 0122).